We begin with the raw amino-acid sequence, 308 residues long: Glutamyl-Q tRNA(Asp) synthetase (308 aa).

Residues R19–S23 and E55 each bind L-glutamate. Positions P22–S32 match the 'HIGH' region motif. 4 residues coordinate Zn(2+): C111, C113, Y125, and C129. Y182 and R200 together coordinate L-glutamate. A 'KMSKS' region motif is present at residues K238–Q242. K241 contributes to the ATP binding site.

Belongs to the class-I aminoacyl-tRNA synthetase family. GluQ subfamily. Zn(2+) is required as a cofactor.

Functionally, catalyzes the tRNA-independent activation of glutamate in presence of ATP and the subsequent transfer of glutamate onto a tRNA(Asp). Glutamate is transferred on the 2-amino-5-(4,5-dihydroxy-2-cyclopenten-1-yl) moiety of the queuosine in the wobble position of the QUC anticodon. The polypeptide is Glutamyl-Q tRNA(Asp) synthetase (Shigella flexneri).